We begin with the raw amino-acid sequence, 1839 residues long: Nuclear pore complex protein DDB_G0274915 (1839 aa).

Polar residues-rich tracts occupy residues 1 to 27 (MNGR…NTIN) and 35 to 54 (NGSL…QTNK). Disordered regions lie at residues 1–54 (MNGR…QTNK), 78–150 (DESS…ISDD), 325–367 (KQFD…PNAD), 480–568 (PLNK…FSTT), 589–636 (TTIA…GGGV), 657–705 (VSTS…DVPG), 739–810 (TTTT…DSKT), 818–837 (PTTE…SSLF), 846–1106 (TTPS…FSSN), and 1129–1839 (TTAT…AKKK). The segment covering 80–90 (SSSSSSSSSSS) has biased composition (low complexity). Residues 91–101 (YDDGNNIPQKG) show a composition bias toward polar residues. Low complexity-rich tracts occupy residues 102–148 (SSTT…INIS) and 329–343 (DNNN…SIYN). Residues 344-354 (RQSIYSPNSKI) show a composition bias toward polar residues. Composition is skewed to low complexity over residues 495 to 568 (TYAT…FSTT) and 589 to 607 (TTIA…SSSS). Residues 616–628 (MFTSDSNKSNLFS) show a composition bias toward polar residues. Low complexity-rich tracts occupy residues 658–671 (STST…SKSS) and 739–760 (TTTT…TTDK). The span at 761-773 (SSADKSSADKSST) shows a compositional bias: basic and acidic residues. Low complexity-rich tracts occupy residues 774–803 (DKST…TTTT), 827–837 (PTTSLTSSSLF), and 846–871 (TTPS…NTTT). Acidic residues-rich tracts occupy residues 896-923 (ESDE…EAEE) and 944-958 (LEAE…DSDE). Composition is skewed to low complexity over residues 1005-1021 (GSSL…SFLT) and 1046-1060 (SSSS…IPTT). Basic and acidic residues predominate over residues 1061–1070 (SKKEKIDDKP). Low complexity predominate over residues 1071–1092 (STTTTTTTTSLFGSTTTSGLFS). A compositionally biased stretch (polar residues) spans 1093–1106 (NPSTTSTGSLFSSN). 2 stretches are compositionally biased toward low complexity: residues 1129 to 1242 (TTAT…FGST) and 1250 to 1292 (ATTT…GLFG). Residues 1293-1310 (ASSSTTPSTGLFGSATTP) show a composition bias toward polar residues. 2 stretches are compositionally biased toward low complexity: residues 1311–1384 (STGL…TTPP) and 1397–1498 (LFGT…TTAT). Residues 1507-1521 (TAPSTGLFGSTTATN) show a composition bias toward polar residues. Residues 1522 to 1673 (PSTGLFGSTT…SSTPFGASPF (152 aa)) are compositionally biased toward low complexity. Polar residues predominate over residues 1676-1708 (PTSTSSPPFGAPTSASSTPFGAPQISTSSSTNL). The span at 1712-1810 (ASSSTAAPSF…PFGSTPSTAP (99 aa)) shows a compositional bias: low complexity.

The chain is Nuclear pore complex protein DDB_G0274915 from Dictyostelium discoideum (Social amoeba).